The sequence spans 172 residues: Small ribosomal subunit protein uS5 (172 aa).

The S5 DRBM domain occupies 17–80 (LREKMISVNR…DEARRKMVKV (64 aa)).

Belongs to the universal ribosomal protein uS5 family. As to quaternary structure, part of the 30S ribosomal subunit. Contacts proteins S4 and S8.

Functionally, with S4 and S12 plays an important role in translational accuracy. Its function is as follows. Located at the back of the 30S subunit body where it stabilizes the conformation of the head with respect to the body. The protein is Small ribosomal subunit protein uS5 of Cupriavidus metallidurans (strain ATCC 43123 / DSM 2839 / NBRC 102507 / CH34) (Ralstonia metallidurans).